The following is a 319-amino-acid chain: Acetyl-coenzyme A carboxylase carboxyl transferase subunit alpha (319 aa).

Residues 35 to 296 enclose the CoA carboxyltransferase C-terminal domain; sequence DLDKEIKQLE…KQRLIEQLNE (262 aa).

This sequence belongs to the AccA family. Acetyl-CoA carboxylase is a heterohexamer composed of biotin carboxyl carrier protein (AccB), biotin carboxylase (AccC) and two subunits each of ACCase subunit alpha (AccA) and ACCase subunit beta (AccD).

It is found in the cytoplasm. It carries out the reaction N(6)-carboxybiotinyl-L-lysyl-[protein] + acetyl-CoA = N(6)-biotinyl-L-lysyl-[protein] + malonyl-CoA. The protein operates within lipid metabolism; malonyl-CoA biosynthesis; malonyl-CoA from acetyl-CoA: step 1/1. Component of the acetyl coenzyme A carboxylase (ACC) complex. First, biotin carboxylase catalyzes the carboxylation of biotin on its carrier protein (BCCP) and then the CO(2) group is transferred by the carboxyltransferase to acetyl-CoA to form malonyl-CoA. The sequence is that of Acetyl-coenzyme A carboxylase carboxyl transferase subunit alpha from Aliivibrio salmonicida (strain LFI1238) (Vibrio salmonicida (strain LFI1238)).